Consider the following 230-residue polypeptide: Ribosomal RNA small subunit methyltransferase Nep1 (230 aa).

Residues Gly184, Gly189, and 205 to 210 (IYNKPL) contribute to the S-adenosyl-L-methionine site.

Belongs to the class IV-like SAM-binding methyltransferase superfamily. RNA methyltransferase NEP1 family. As to quaternary structure, homodimer.

It catalyses the reaction a pseudouridine in rRNA + S-adenosyl-L-methionine = an N(1)-methylpseudouridine in rRNA + S-adenosyl-L-homocysteine + H(+). Functionally, methyltransferase involved in ribosomal biogenesis. Specifically catalyzes the N1-methylation of the pseudouridine corresponding to position 914 in M.jannaschii 16S rRNA. This is Ribosomal RNA small subunit methyltransferase Nep1 from Staphylothermus marinus (strain ATCC 43588 / DSM 3639 / JCM 9404 / F1).